The following is a 635-amino-acid chain: 1-deoxy-D-xylulose-5-phosphate synthase (635 aa).

Thiamine diphosphate-binding positions include H72 and 113–115 (GHA). D144 contacts Mg(2+). Thiamine diphosphate is bound by residues 145 to 146 (GA), N174, Y286, and E369. Mg(2+) is bound at residue N174.

The protein belongs to the transketolase family. DXPS subfamily. Homodimer. Mg(2+) is required as a cofactor. It depends on thiamine diphosphate as a cofactor.

The catalysed reaction is D-glyceraldehyde 3-phosphate + pyruvate + H(+) = 1-deoxy-D-xylulose 5-phosphate + CO2. The protein operates within metabolic intermediate biosynthesis; 1-deoxy-D-xylulose 5-phosphate biosynthesis; 1-deoxy-D-xylulose 5-phosphate from D-glyceraldehyde 3-phosphate and pyruvate: step 1/1. Catalyzes the acyloin condensation reaction between C atoms 2 and 3 of pyruvate and glyceraldehyde 3-phosphate to yield 1-deoxy-D-xylulose-5-phosphate (DXP). The chain is 1-deoxy-D-xylulose-5-phosphate synthase from Gloeothece citriformis (strain PCC 7424) (Cyanothece sp. (strain PCC 7424)).